The sequence spans 536 residues: Bifunctional purine biosynthesis protein PurH (536 aa).

The region spanning Ile-8–Thr-158 is the MGS-like domain.

It belongs to the PurH family.

The catalysed reaction is (6R)-10-formyltetrahydrofolate + 5-amino-1-(5-phospho-beta-D-ribosyl)imidazole-4-carboxamide = 5-formamido-1-(5-phospho-D-ribosyl)imidazole-4-carboxamide + (6S)-5,6,7,8-tetrahydrofolate. The enzyme catalyses IMP + H2O = 5-formamido-1-(5-phospho-D-ribosyl)imidazole-4-carboxamide. The protein operates within purine metabolism; IMP biosynthesis via de novo pathway; 5-formamido-1-(5-phospho-D-ribosyl)imidazole-4-carboxamide from 5-amino-1-(5-phospho-D-ribosyl)imidazole-4-carboxamide (10-formyl THF route): step 1/1. Its pathway is purine metabolism; IMP biosynthesis via de novo pathway; IMP from 5-formamido-1-(5-phospho-D-ribosyl)imidazole-4-carboxamide: step 1/1. The sequence is that of Bifunctional purine biosynthesis protein PurH from Rhizobium meliloti (strain 1021) (Ensifer meliloti).